A 64-amino-acid polypeptide reads, in one-letter code: Large ribosomal subunit protein bL35 (64 aa).

Residues 1–44 form a disordered region; sequence MPKLKTNRGAAKRFKVKASGRISRARSNHSHILTKKDPKRKRRL. Over residues 10-44 the composition is skewed to basic residues; sequence AAKRFKVKASGRISRARSNHSHILTKKDPKRKRRL.

The protein belongs to the bacterial ribosomal protein bL35 family.

This Halorhodospira halophila (strain DSM 244 / SL1) (Ectothiorhodospira halophila (strain DSM 244 / SL1)) protein is Large ribosomal subunit protein bL35.